The sequence spans 64 residues: Prokaryotic ubiquitin-like protein Pup (64 aa).

The disordered stretch occupies residues 1–38; that stretch reads MAQEQTKRGGGGGEDDDPTGSTAAGQERREKLTEETDD. The tract at residues 21–58 is ARC ATPase binding; that stretch reads STAAGQERREKLTEETDDLLDEIDDVLEENAEDFVRAY. Residues 23-52 are a coiled coil; that stretch reads AAGQERREKLTEETDDLLDEIDDVLEENAE. Gln-64 carries the post-translational modification Deamidated glutamine. Gln-64 participates in a covalent cross-link: Isoglutamyl lysine isopeptide (Gln-Lys) (interchain with K-? in acceptor proteins).

This sequence belongs to the prokaryotic ubiquitin-like protein family. In terms of assembly, strongly interacts with the proteasome-associated ATPase ARC through a hydrophobic interface; the interacting region of Pup lies in its C-terminal half. There is one Pup binding site per ARC hexamer ring. Is modified by deamidation of its C-terminal glutamine to glutamate by the deamidase Dop, a prerequisite to the subsequent pupylation process.

Its pathway is protein degradation; proteasomal Pup-dependent pathway. Protein modifier that is covalently attached to lysine residues of substrate proteins, thereby targeting them for proteasomal degradation. The tagging system is termed pupylation. The protein is Prokaryotic ubiquitin-like protein Pup of Mycolicibacterium gilvum (strain PYR-GCK) (Mycobacterium gilvum (strain PYR-GCK)).